We begin with the raw amino-acid sequence, 375 residues long: Phytanoyl-CoA hydroxylase-interacting protein-like (375 aa).

3 positions are modified to phosphoserine: S11, S12, and S15. N-linked (GlcNAc...) asparagine glycosylation is present at N22. Residue S24 is modified to Phosphoserine. N36 carries an N-linked (GlcNAc...) asparagine glycan. The Fibronectin type-III domain occupies V51 to Y160.

It belongs to the PHYHIP family.

Functionally, may play a role in the development of the central system. This Mus musculus (Mouse) protein is Phytanoyl-CoA hydroxylase-interacting protein-like (Phyhipl).